We begin with the raw amino-acid sequence, 68 residues long: Large ribosomal subunit protein bL31 (68 aa).

Residues cysteine 16, cysteine 18, cysteine 37, and cysteine 40 each contribute to the Zn(2+) site.

Belongs to the bacterial ribosomal protein bL31 family. Type A subfamily. Part of the 50S ribosomal subunit. It depends on Zn(2+) as a cofactor.

Functionally, binds the 23S rRNA. The chain is Large ribosomal subunit protein bL31 from Nitrosococcus oceani (strain ATCC 19707 / BCRC 17464 / JCM 30415 / NCIMB 11848 / C-107).